Here is a 435-residue protein sequence, read N- to C-terminus: Methanethiol oxidase (435 aa).

The first 24 residues, 1–24 (MKKHLLAGACALAMGFAVIPGTFA), serve as a signal peptide directing secretion.

This sequence belongs to the selenium-binding protein family. As to quaternary structure, homotetramer. Cu cation serves as cofactor.

The protein localises to the periplasm. The catalysed reaction is methanethiol + O2 + H2O = hydrogen sulfide + formaldehyde + H2O2 + H(+). It functions in the pathway organosulfur degradation. Inhibited by EDTA but not by EGTA. Catalyzes the oxidation of methanethiol. Can also degrade ethanethiol, but not methanol, methylamine or dimethylsulfide. This chain is Methanethiol oxidase, found in Hyphomicrobium sp.